A 245-amino-acid polypeptide reads, in one-letter code: Lactate utilization protein A (245 aa).

This sequence belongs to the LutA/YkgE family.

Its function is as follows. Is involved in L-lactate degradation and allows cells to grow with lactate as the sole carbon source. The sequence is that of Lactate utilization protein A from Macrococcus caseolyticus (strain JCSC5402) (Macrococcoides caseolyticum).